The primary structure comprises 236 residues: Leucyl/phenylalanyl-tRNA--protein transferase (236 aa).

Belongs to the L/F-transferase family.

Its subcellular location is the cytoplasm. The enzyme catalyses N-terminal L-lysyl-[protein] + L-leucyl-tRNA(Leu) = N-terminal L-leucyl-L-lysyl-[protein] + tRNA(Leu) + H(+). It catalyses the reaction N-terminal L-arginyl-[protein] + L-leucyl-tRNA(Leu) = N-terminal L-leucyl-L-arginyl-[protein] + tRNA(Leu) + H(+). The catalysed reaction is L-phenylalanyl-tRNA(Phe) + an N-terminal L-alpha-aminoacyl-[protein] = an N-terminal L-phenylalanyl-L-alpha-aminoacyl-[protein] + tRNA(Phe). Functions in the N-end rule pathway of protein degradation where it conjugates Leu, Phe and, less efficiently, Met from aminoacyl-tRNAs to the N-termini of proteins containing an N-terminal arginine or lysine. The sequence is that of Leucyl/phenylalanyl-tRNA--protein transferase from Shewanella sp. (strain ANA-3).